The primary structure comprises 131 residues: Global transcriptional regulator Spx (131 aa).

Cysteines 10 and 13 form a disulfide.

The protein belongs to the ArsC family. Spx subfamily. As to quaternary structure, interacts with the C-terminal domain of the alpha subunit of the RNAP.

Its subcellular location is the cytoplasm. Its activity is regulated as follows. Under non-stress conditions, Spx is degraded by ClpXP. Efficient degradation by ClpXP requires the adapter protein SpxH/YjbH. Function, levels and solubility of Spx are affected by SpxH/YjbH aggregation and stress conditions. Its function is as follows. Global transcriptional regulator that plays a key role in stress response and exerts either positive or negative regulation of genes. Acts by interacting with the C-terminal domain of the alpha subunit of the RNA polymerase (RNAP). This interaction can enhance binding of RNAP to the promoter region of target genes and stimulate their transcription, or block interaction of RNAP with activator proteins and repress transcription. Functionally, required for transcription of thioredoxin reductase (trxB). Modulates the expression of icaR, encoding a repressor of the biofilm operon icaADBC. Also controls the transcription of trfA, a gene implicated in cell wall antibiotic resistance, which in turn is required for degradation of MazE antitoxin, the unstable component of the MazEF toxin-antitoxin system, that neutralizes the endoribonuclease activity of MazF toxin. This is Global transcriptional regulator Spx from Staphylococcus aureus (strain NCTC 8325 / PS 47).